Consider the following 382-residue polypeptide: Cell division cycle-associated protein 7 (382 aa).

2 disordered regions span residues 68–118 (PLRV…EDGM) and 151–217 (GRHS…EDKY). Residues 105–117 (SEEEEEEEEEEDG) are compositionally biased toward acidic residues. An interaction with MYC region spans residues 152-177 (RHSLPGHRAKDSKSPRRRTFPGVATR). The Nuclear localization signal motif lies at 167–183 (RRRTFPGVATRRNPERR). Phosphothreonine is present on T170. S197 is subject to Phosphoserine. At T203 the chain carries Phosphothreonine. A compositionally biased stretch (acidic residues) spans 203-215 (TEEEEEEEEEEED). A Glycyl lysine isopeptide (Lys-Gly) (interchain with G-Cter in SUMO2) cross-link involves residue K216. S225 bears the Phosphoserine mark. The tract at residues 258-382 (EEEIRNICSN…SLKQEFEMQA (125 aa)) is mediates transcriptional activity.

As to quaternary structure, interacts with MYC (via C-terminus), YWHAE and YWHAZ. Phosphorylation at Thr-170 promotes interaction with YWHAE and YWHAZ, dissociation from MYC and sequestration in the cytoplasm.

The protein resides in the nucleus. It localises to the cytoplasm. Functionally, participates in MYC-mediated cell transformation and apoptosis; induces anchorage-independent growth and clonogenicity in lymphoblastoid cells. Insufficient to induce tumorigenicity when overexpressed but contributes to MYC-mediated tumorigenesis. May play a role as transcriptional regulator. This is Cell division cycle-associated protein 7 (Cdca7) from Mus musculus (Mouse).